A 405-amino-acid chain; its full sequence is Tyrosine--tRNA ligase (405 aa).

The short motif at 48 to 57 (PTAPDLHLGH) is the 'HIGH' region element. The short motif at 232-236 (KMSKS) is the 'KMSKS' region element. K235 contacts ATP. The S4 RNA-binding domain occupies 343–404 (IWLPKLLADA…GKRRFVKVIF (62 aa)).

This sequence belongs to the class-I aminoacyl-tRNA synthetase family. TyrS type 2 subfamily. As to quaternary structure, homodimer.

The protein resides in the cytoplasm. It carries out the reaction tRNA(Tyr) + L-tyrosine + ATP = L-tyrosyl-tRNA(Tyr) + AMP + diphosphate + H(+). In terms of biological role, catalyzes the attachment of tyrosine to tRNA(Tyr) in a two-step reaction: tyrosine is first activated by ATP to form Tyr-AMP and then transferred to the acceptor end of tRNA(Tyr). In Desulfotalea psychrophila (strain LSv54 / DSM 12343), this protein is Tyrosine--tRNA ligase.